The primary structure comprises 177 residues: Large ribosomal subunit protein uL6 (177 aa).

Belongs to the universal ribosomal protein uL6 family. As to quaternary structure, part of the 50S ribosomal subunit.

Functionally, this protein binds to the 23S rRNA, and is important in its secondary structure. It is located near the subunit interface in the base of the L7/L12 stalk, and near the tRNA binding site of the peptidyltransferase center. The protein is Large ribosomal subunit protein uL6 of Paramagnetospirillum magneticum (strain ATCC 700264 / AMB-1) (Magnetospirillum magneticum).